The sequence spans 328 residues: tRNA uridine(34) hydroxylase (328 aa).

The 95-residue stretch at 123-217 folds into the Rhodanese domain; that stretch reads SDPDVLLVDT…YLEEVPQEES (95 aa). Cys-177 serves as the catalytic Cysteine persulfide intermediate.

This sequence belongs to the TrhO family.

It catalyses the reaction uridine(34) in tRNA + AH2 + O2 = 5-hydroxyuridine(34) in tRNA + A + H2O. Catalyzes oxygen-dependent 5-hydroxyuridine (ho5U) modification at position 34 in tRNAs. The protein is tRNA uridine(34) hydroxylase of Psychromonas ingrahamii (strain DSM 17664 / CCUG 51855 / 37).